Consider the following 662-residue polypeptide: Chromosomal replication initiator protein DnaA (662 aa).

Residues 1–93 form a domain I, interacts with DnaA modulators region; it reads MDDEQNVLAT…QVEGLGVRIA (93 aa). Residues 93–322 are domain II; sequence AAPATPTAER…STPAPANSSA (230 aa). A compositionally biased stretch (low complexity) spans 96–105; it reads ATPTAERAAA. Residues 96 to 294 form a disordered region; the sequence is ATPTAERAAA…SDGPVERDDE (199 aa). Basic and acidic residues predominate over residues 114-123; the sequence is SRPERPRGER. The segment covering 166–199 has biased composition (low complexity); the sequence is PPAAEYTPAAEYTPAAEYTPAAEYSPEPEYTPAT. 2 stretches are compositionally biased toward basic and acidic residues: residues 236-248 and 261-290; these read TPRR…RRDA and PGDR…GPVE. The domain III, AAA+ region stretch occupies residues 323–539; sequence SLNAKYTFET…GALIRVTAFA (217 aa). ATP contacts are provided by Gly367, Gly369, Lys370, and Thr371. The tract at residues 540–662 is domain IV, binds dsDNA; sequence SLNGQPLDLS…LTARIKQRSR (123 aa).

Belongs to the DnaA family. In terms of assembly, oligomerizes as a right-handed, spiral filament on DNA at oriC.

Its subcellular location is the cytoplasm. In terms of biological role, plays an essential role in the initiation and regulation of chromosomal replication. ATP-DnaA binds to the origin of replication (oriC) to initiate formation of the DNA replication initiation complex once per cell cycle. Binds the DnaA box (a 9 base pair repeat at the origin) and separates the double-stranded (ds)DNA. Forms a right-handed helical filament on oriC DNA; dsDNA binds to the exterior of the filament while single-stranded (ss)DNA is stabiized in the filament's interior. The ATP-DnaA-oriC complex binds and stabilizes one strand of the AT-rich DNA unwinding element (DUE), permitting loading of DNA polymerase. After initiation quickly degrades to an ADP-DnaA complex that is not apt for DNA replication. Binds acidic phospholipids. The sequence is that of Chromosomal replication initiator protein DnaA from Nocardia farcinica (strain IFM 10152).